Here is a 129-residue protein sequence, read N- to C-terminus: ATP synthase epsilon chain (129 aa).

It belongs to the ATPase epsilon chain family. As to quaternary structure, F-type ATPases have 2 components, CF(1) - the catalytic core - and CF(0) - the membrane proton channel. CF(1) has five subunits: alpha(3), beta(3), gamma(1), delta(1), epsilon(1). CF(0) has three main subunits: a, b and c.

Its subcellular location is the cell inner membrane. Produces ATP from ADP in the presence of a proton gradient across the membrane. The chain is ATP synthase epsilon chain from Campylobacter fetus subsp. fetus (strain 82-40).